The following is a 626-amino-acid chain: Ankyrin repeat domain-containing protein 55 (626 aa).

ANK repeat units lie at residues Val-25 to Glu-54, Glu-59 to Thr-88, Tyr-92 to Lys-124, Asn-125 to His-156, Glu-160 to Leu-189, Asp-193 to Ile-222, Ser-229 to Ala-259, Asp-263 to Leu-292, and Asn-296 to Ala-325. Positions Lys-354–Glu-372 are enriched in basic and acidic residues. 3 disordered regions span residues Lys-354–Val-377, His-455–Asn-491, and Gln-522–Asn-626. Ser-474 bears the Phosphoserine mark. Residues Gln-604 to Glu-614 show a composition bias toward basic and acidic residues. Positions Gly-616–Asn-626 are enriched in polar residues.

This is Ankyrin repeat domain-containing protein 55 (Ankrd55) from Mus musculus (Mouse).